We begin with the raw amino-acid sequence, 1325 residues long: ATP-binding cassette sub-family C member 4 (1325 aa).

The next 6 helical transmembrane spans lie at 93 to 113 (LILGIFTLIEEGTRVVQPLFL), 136 to 156 (GYAAVLSMCTLILAILHHLYF), 205 to 225 (FDQVTIFLHFLWAGPLQAIAV), 227 to 247 (VLLWVEIGISCLAGLAVLVIL), 322 to 342 (ASFFIANKVILFVTFTSYVLL), and 351 to 371 (VFVAMTLYGAVRLTVTLFFPS). In terms of domain architecture, ABC transmembrane type-1 1 spans 93-377 (LILGIFTLIE…FFPSAIERGS (285 aa)). The 224-residue stretch at 410-633 (VHVQDFTAFW…GVDFGSLLKK (224 aa)) folds into the ABC transporter 1 domain. 445–452 (GPVGAGKS) provides a ligand contact to ATP. Thr646 and Thr648 each carry phosphothreonine. The segment covering 657-667 (ASIWSQQSSRP) has biased composition (polar residues). Residues 657-690 (ASIWSQQSSRPSLKDGAPEGQDAENTQAVQPEES) are disordered. Residues Ser664 and Ser668 each carry the phosphoserine modification. 5 helical membrane passes run 710-730 (SWFFIIFLVLLNMVGQVFYVL), 761-781 (LSWYLGIYAGLTAVTVLFGIA), 849-869 (LVVSVIAVAAAVIPWILIPLV), 954-974 (AICAIFVIVVAFGSLVLAKTL), and 977-997 (GQVGLALSYALTLMGMFQWSV). The region spanning 714 to 1005 (IIFLVLLNMV…SVRQSAEVEN (292 aa)) is the ABC transmembrane type-1 2 domain. Residues 1041 to 1274 (IVFDNVNFTY…PESLFYKMVQ (234 aa)) form the ABC transporter 2 domain. 1075–1082 (GRTGAGKS) is an ATP binding site. The short motif at 1322–1325 (ETAL) is the PDZ-binding element.

As to quaternary structure, interacts (via PDZ-binding motif) with SNX27 (via PDZ domain); this interaction accelerates MRP4 internalization. Mg(2+) is required as a cofactor. Post-translationally, N-glycosylated; leading to substrate-selective effects on its transport activity.

The protein localises to the basolateral cell membrane. Its subcellular location is the apical cell membrane. The catalysed reaction is ATP + H2O + xenobioticSide 1 = ADP + phosphate + xenobioticSide 2.. It carries out the reaction an S-substituted glutathione(in) + ATP + H2O = an S-substituted glutathione(out) + ADP + phosphate + H(+). It catalyses the reaction 17beta-estradiol 17-O-(beta-D-glucuronate)(in) + ATP + H2O = 17beta-estradiol 17-O-(beta-D-glucuronate)(out) + ADP + phosphate + H(+). The enzyme catalyses dehydroepiandrosterone 3-sulfate(in) + ATP + H2O = dehydroepiandrosterone 3-sulfate(out) + ADP + phosphate + H(+). The catalysed reaction is leukotriene C4(in) + ATP + H2O = leukotriene C4(out) + ADP + phosphate + H(+). It carries out the reaction leukotriene B4(in) + ATP + H2O = leukotriene B4(out) + ADP + phosphate + H(+). It catalyses the reaction urate(in) + ATP + H2O = urate(out) + ADP + phosphate + H(+). The enzyme catalyses 3',5'-cyclic GMP(in) + ATP + H2O = 3',5'-cyclic GMP(out) + ADP + phosphate + H(+). The catalysed reaction is 3',5'-cyclic AMP(in) + ATP + H2O = 3',5'-cyclic AMP(out) + ADP + phosphate + H(+). It carries out the reaction prostaglandin E2(in) + ATP + H2O = prostaglandin E2(out) + ADP + phosphate + H(+). It catalyses the reaction prostaglandin E1(in) + ATP + H2O = prostaglandin E1(out) + ADP + phosphate + H(+). The enzyme catalyses glycodeoxycholate(in) + glutathione(in) + ATP + H2O = glycodeoxycholate(out) + glutathione(out) + ADP + phosphate + H(+). The catalysed reaction is cholate(in) + glutathione(in) + ATP + H2O = cholate(out) + glutathione(out) + ADP + phosphate + H(+). It carries out the reaction glycocholate(in) + glutathione(in) + ATP + H2O = glycocholate(out) + glutathione(out) + ADP + phosphate + H(+). It catalyses the reaction taurocholate(in) + glutathione(in) + ATP + H2O = taurocholate(out) + glutathione(out) + ADP + phosphate + H(+). The enzyme catalyses glycochenodeoxycholate(in) + glutathione(in) + ATP + H2O = glycochenodeoxycholate(out) + glutathione(out) + ADP + phosphate + H(+). The catalysed reaction is taurochenodeoxycholate(in) + glutathione(in) + ATP + H2O = taurochenodeoxycholate(out) + glutathione(out) + ADP + phosphate + H(+). It carries out the reaction glycoursodeoxycholate(in) + glutathione(in) + ATP + H2O = glycoursodeoxycholate(out) + glutathione(out) + ADP + phosphate + H(+). It catalyses the reaction tauroursodeoxycholate(in) + glutathione(in) + ATP + H2O = tauroursodeoxycholate(out) + glutathione(out) + ADP + phosphate + H(+). Its function is as follows. ATP-dependent transporter of the ATP-binding cassette (ABC) family that actively extrudes physiological compounds and xenobiotics from cells. Transports a range of endogenous molecules that have a key role in cellular communication and signaling, including cyclic nucleotides such as cyclic AMP (cAMP) and cyclic GMP (cGMP), bile acids, steroid conjugates, urate, and prostaglandins. Also mediates the ATP-dependent efflux of glutathione conjugates such as leukotriene C4 (LTC4) and leukotriene B4 (LTB4). The presence of GSH is necessary for the ATP-dependent transport of LTB4, whereas GSH is not required for the transport of LTC4. Mediates the cotransport of bile acids with reduced glutathione (GSH). Transports a wide range of drugs and their metabolites, including anticancer, antiviral and antibiotics molecules. Confers resistance to anticancer agents. The sequence is that of ATP-binding cassette sub-family C member 4 from Mus musculus (Mouse).